Here is a 742-residue protein sequence, read N- to C-terminus: ATP-dependent RNA helicase DBP7 (742 aa).

Residues 45–100 form a disordered region; it reads GKTVSRKRKANTTGDEGIIPGRGENSIKKLHKESSYSSEEQEKYKGRNAHNTQGRT. The short motif at 143-172 is the Q motif element; the sequence is DQFASLGVTSLLVSHLEQKMRIKKPTSIQK. In terms of domain architecture, Helicase ATP-binding spans 178–372; the sequence is IIGNAGKNDF…NVALKDYKLI (195 aa). 191–198 contributes to the ATP binding site; that stretch reads AQTGSGKT. The DEAD box signature appears at 307 to 310; that stretch reads DEGD. Residues 405 to 605 enclose the Helicase C-terminal domain; it reads TLAATLNNIT…ILMPAFKDVN (201 aa). The tract at residues 701–726 is disordered; that stretch reads AMGLQSSKDGNSEKKPTKENSKNKMF. Over residues 710 to 722 the composition is skewed to basic and acidic residues; it reads GNSEKKPTKENSK.

This sequence belongs to the DEAD box helicase family. DDX31/DBP7 subfamily.

It localises to the nucleus. Its subcellular location is the nucleolus. The enzyme catalyses ATP + H2O = ADP + phosphate + H(+). In terms of biological role, ATP-binding RNA helicase involved in the biogenesis of 60S ribosomal subunits and is required for the normal formation of 25S and 5.8S rRNAs. The sequence is that of ATP-dependent RNA helicase DBP7 (DBP7) from Saccharomyces cerevisiae (strain YJM789) (Baker's yeast).